The primary structure comprises 525 residues: GMP synthase [glutamine-hydrolyzing] (525 aa).

One can recognise a Glutamine amidotransferase type-1 domain in the interval 9–207 (RILILDFGSQ…VRDICQCEAL (199 aa)). Residue C86 is the Nucleophile of the active site. Active-site residues include H181 and E183. The 193-residue stretch at 208–400 (WTPAKIIDDA…LGLPYDMLYR (193 aa)) folds into the GMPS ATP-PPase domain. 235–241 (SGGVDSS) is an ATP binding site.

Homodimer.

It carries out the reaction XMP + L-glutamine + ATP + H2O = GMP + L-glutamate + AMP + diphosphate + 2 H(+). It functions in the pathway purine metabolism; GMP biosynthesis; GMP from XMP (L-Gln route): step 1/1. Functionally, catalyzes the synthesis of GMP from XMP. The protein is GMP synthase [glutamine-hydrolyzing] of Citrobacter koseri (strain ATCC BAA-895 / CDC 4225-83 / SGSC4696).